We begin with the raw amino-acid sequence, 404 residues long: Cysteine desulfurase IscS (404 aa).

Pyridoxal 5'-phosphate-binding positions include 75 to 76 (AT), asparagine 155, glutamine 183, and 203 to 205 (SSH). Residue lysine 206 is modified to N6-(pyridoxal phosphate)lysine. A pyridoxal 5'-phosphate-binding site is contributed by threonine 243. Cysteine 328 functions as the Cysteine persulfide intermediate in the catalytic mechanism. Cysteine 328 serves as a coordination point for [2Fe-2S] cluster.

This sequence belongs to the class-V pyridoxal-phosphate-dependent aminotransferase family. NifS/IscS subfamily. Homodimer. Forms a heterotetramer with IscU, interacts with other sulfur acceptors. Pyridoxal 5'-phosphate is required as a cofactor.

It localises to the cytoplasm. It carries out the reaction (sulfur carrier)-H + L-cysteine = (sulfur carrier)-SH + L-alanine. It participates in cofactor biosynthesis; iron-sulfur cluster biosynthesis. Its function is as follows. Master enzyme that delivers sulfur to a number of partners involved in Fe-S cluster assembly, tRNA modification or cofactor biosynthesis. Catalyzes the removal of elemental sulfur atoms from cysteine to produce alanine. Functions as a sulfur delivery protein for Fe-S cluster synthesis onto IscU, an Fe-S scaffold assembly protein, as well as other S acceptor proteins. The protein is Cysteine desulfurase IscS of Haemophilus influenzae (strain PittEE).